A 501-amino-acid chain; its full sequence is Flagellin (501 aa).

This sequence belongs to the bacterial flagellin family.

Its subcellular location is the secreted. The protein resides in the bacterial flagellum. In terms of biological role, flagellin is the subunit protein which polymerizes to form the filaments of bacterial flagella. The chain is Flagellin (fliC) from Salmonella choleraesuis (strain SC-B67).